The primary structure comprises 606 residues: MGKVIGIDLGTTFSCVAVMEGGQPVVIPNSEGTRTTPSVVAFTKEGERLVGHPARRQAIINPERTIMSIKRHMGTDYKVKIDDKEYTPQEISAMILQKLKADAEAYLGEKVTQAVITVPAYFNDSQRQATKDAGRIAGLEVLRIINEPTAAALAYGLDKEGNQKVMVYDLGGGTFDVSILEIGDGVFEVLATSGNNHLGGDDFDQRIIDWLADNFQKEHGIDLRKDRMALQRLKEAAERAKIELSSAMVTNINLPFITADASGPKHIDVNLTRAKFEELISDLVESTVGPVKQALSDAGLKPEDIDKVLLVGGSTRIPLVQETVKKIMGKEPHKGINPDEAVAIGAAIQAAVLAGEIKDILLLDVTPLSLGIETLGGVFTKIIERNTTIPVRKSQIFTTAADNQTSVEIHVLQGERPLAKDNKSLGRFILSGIPPAPRGVPQIEVTFDIDANGIVHVSAKDLATGKSQQITITGSTNLSEEEIQRMINEAKQYEEQDRKKREEIEIRNRADSLIYQAEKTMKDLGDKMTQAEKDEINKEIENVRKALEGTDVEAIKAASEKLSEAFYKVSTRLYQQAAGSANPGGSQGTSQGNVYEADYKVEDDNK.

Position 174 is a phosphothreonine; by autocatalysis (T174). The segment at 576-606 (QAAGSANPGGSQGTSQGNVYEADYKVEDDNK) is disordered. The segment covering 597–606 (ADYKVEDDNK) has biased composition (basic and acidic residues).

It belongs to the heat shock protein 70 family.

Acts as a chaperone. This is Chaperone protein DnaK from Caldanaerobacter subterraneus subsp. tengcongensis (strain DSM 15242 / JCM 11007 / NBRC 100824 / MB4) (Thermoanaerobacter tengcongensis).